Consider the following 216-residue polypeptide: Somatotropin (216 aa).

A signal peptide spans 1–26 (MATGSQTSWLLTFTLLCLPWPQEAGA). H45 contacts Zn(2+). An intrachain disulfide couples C78 to C189. S131 bears the Phosphoserine mark. E198 is a Zn(2+) binding site. Cysteines 206 and 214 form a disulfide.

The protein belongs to the somatotropin/prolactin family.

Its subcellular location is the secreted. In terms of biological role, plays an important role in growth control. Its major role in stimulating body growth is to stimulate the liver and other tissues to secrete IGF1. It stimulates both the differentiation and proliferation of myoblasts. It also stimulates amino acid uptake and protein synthesis in muscle and other tissues. The chain is Somatotropin (GH1) from Spalax ehrenbergi (Middle East blind mole rat).